Consider the following 531-residue polypeptide: MVSRFEHPAGGYKKIFETAEELNEPLPATVTGRIPSFIKGSLLRLGPGLFEAGAEPFYHLFDGQALMHKFDFSNGQVTYFRKFVKTDAYVRAITEKRVVITEFGTCAYPDPCKNIFSRFFSYFKGVEVTDNCLVNVYPIGEDFYAVTETNYITKVNVDTLETLKKVDMCNYVNINGVTAHPHIERDGTVYNIGNCMGKGASLAYNIVRIPPTQKDKSDPIEKSKVVVQFPSAERFKPSYVHSFGMTENYFVFVETPVKINLLKFLSAWSIRGSNYMDCFESDEEKGTWIHIARKHPGEYIDYKFRTSAMGLFHHINCYEDSGFIVFDLCAWKGFEFVYNYLWLANLRANWEEVKRNAMIAPQPEVRRYVIPLDPFREEQGKNLISLPYTTATATMRADGTIWLEPEVLFSGPRQAFEFPQINYRMVNGKNYTYAYGLGLNHFVPDRICKLNVRTKETWVWQEPDSYPSEPLFVQTPDGVDEDDGILMTIVVSPGAQRPTYCLILNAKDLSEIARAEVEILTPVTFHGMYKP.

Cysteine 112 carries S-palmitoyl cysteine; in membrane form lipidation. Fe cation contacts are provided by histidine 180, histidine 241, and histidine 313. Cysteine 329 is lipidated: S-palmitoyl cysteine; in membrane form. Fe cation is bound at residue histidine 526.

The protein belongs to the carotenoid oxygenase family. Requires Fe(2+) as cofactor. Post-translationally, palmitoylated. As to expression, retinal pigment epithelium-specific.

It is found in the cytoplasm. The protein localises to the cell membrane. It carries out the reaction an all-trans-retinyl ester + H2O = 11-cis-retinol + a fatty acid + H(+). The enzyme catalyses lutein = (3R,3'S)-zeaxanthin. It catalyses the reaction all-trans-retinyl hexadecanoate + H2O = 11-cis-retinol + hexadecanoate + H(+). Plays important roles in the production of 11-cis retinal and in visual pigment regeneration. Capable of catalyzing the isomerization of lutein to meso-zeaxanthin an eye-specific carotenoid. This chain is Retinoid isomerohydrolase (rpe65a), found in Danio rerio (Zebrafish).